Consider the following 328-residue polypeptide: Transcription factor bHLH84 (328 aa).

The tract at residues 145–248 (QCESSKKRTR…ASRGAATDPQ (104 aa)) is disordered. Positions 220-229 (LSKEDGEDSK) are enriched in basic and acidic residues. The bHLH domain occupies 243-292 (AATDPQSLYARKRRERINERLRILQHLVPNGTKVDISTMLEEAVQYVKFL).

It belongs to the bHLH protein family. Homodimer.

The protein localises to the nucleus. This chain is Transcription factor bHLH84 (BHLH84), found in Arabidopsis thaliana (Mouse-ear cress).